A 380-amino-acid chain; its full sequence is Cytochrome b (380 aa).

4 consecutive transmembrane segments (helical) span residues 34–54 (FGSLLGICLLTQILTGLLLAM), 78–99 (WLIRNLHANGASFFFICIYLHI), 114–134 (WNTGVILLLTLMATAFVGYVL), and 179–199 (FFALHFLLPFMITGLTTIHLT). Heme b contacts are provided by H84 and H98. Positions 183 and 197 each coordinate heme b. Residue H202 coordinates a ubiquinone. 4 helical membrane passes run 227-247 (LKDFLGFTLMLLPLTTLALFS), 289-309 (LGGVLALAASVLILFLAPFLH), 321-341 (ISQLLFWILVTNLLILTWVGS), and 348-368 (FIIIGQLASITYFTILLILFP).

The protein belongs to the cytochrome b family. As to quaternary structure, the cytochrome bc1 complex contains 11 subunits: 3 respiratory subunits (MT-CYB, CYC1 and UQCRFS1), 2 core proteins (UQCRC1 and UQCRC2) and 6 low-molecular weight proteins (UQCRH/QCR6, UQCRB/QCR7, UQCRQ/QCR8, UQCR10/QCR9, UQCR11/QCR10 and a cleavage product of UQCRFS1). This cytochrome bc1 complex then forms a dimer. The cofactor is heme b.

It is found in the mitochondrion inner membrane. Functionally, component of the ubiquinol-cytochrome c reductase complex (complex III or cytochrome b-c1 complex) that is part of the mitochondrial respiratory chain. The b-c1 complex mediates electron transfer from ubiquinol to cytochrome c. Contributes to the generation of a proton gradient across the mitochondrial membrane that is then used for ATP synthesis. This Pelecanoides urinatrix (Common diving petrel) protein is Cytochrome b (MT-CYB).